A 204-amino-acid polypeptide reads, in one-letter code: Arginine exporter protein ArgO (204 aa).

6 helical membrane passes run M1–P21, L37–G57, L67–A87, I111–V131, W147–A167, and V179–A199.

The protein belongs to the LysE/ArgO transporter (TC 2.A.75) family.

It is found in the cell inner membrane. The enzyme catalyses L-arginine(in) = L-arginine(out). In terms of biological role, involved in the export of arginine. Important to control the intracellular level of arginine and the correct balance between arginine and lysine. In Pectobacterium carotovorum subsp. carotovorum (strain PC1), this protein is Arginine exporter protein ArgO.